We begin with the raw amino-acid sequence, 179 residues long: NAD(P)H-quinone oxidoreductase subunit I, chloroplastic (179 aa).

4Fe-4S ferredoxin-type domains lie at Gly-55–Arg-84 and Leu-95–Glu-124. 8 residues coordinate [4Fe-4S] cluster: Cys-64, Cys-67, Cys-70, Cys-74, Cys-104, Cys-107, Cys-110, and Cys-114.

Belongs to the complex I 23 kDa subunit family. As to quaternary structure, NDH is composed of at least 16 different subunits, 5 of which are encoded in the nucleus. Requires [4Fe-4S] cluster as cofactor.

The protein resides in the plastid. It localises to the chloroplast thylakoid membrane. It carries out the reaction a plastoquinone + NADH + (n+1) H(+)(in) = a plastoquinol + NAD(+) + n H(+)(out). The enzyme catalyses a plastoquinone + NADPH + (n+1) H(+)(in) = a plastoquinol + NADP(+) + n H(+)(out). Its function is as follows. NDH shuttles electrons from NAD(P)H:plastoquinone, via FMN and iron-sulfur (Fe-S) centers, to quinones in the photosynthetic chain and possibly in a chloroplast respiratory chain. The immediate electron acceptor for the enzyme in this species is believed to be plastoquinone. Couples the redox reaction to proton translocation, and thus conserves the redox energy in a proton gradient. The protein is NAD(P)H-quinone oxidoreductase subunit I, chloroplastic of Nymphaea alba (White water-lily).